A 108-amino-acid polypeptide reads, in one-letter code: Glutaredoxin-1 (108 aa).

One can recognise a Glutaredoxin domain in the interval 3–106; that stretch reads EEFVQQRLTN…DILSSIGVLR (104 aa). A disulfide bridge connects residues Cys-23 and Cys-26.

The protein belongs to the glutaredoxin family.

The protein localises to the virion. In terms of biological role, displays thioltransferase and dehydroascorbate reductase activities. The protein is Glutaredoxin-1 (OPG075) of Variola virus (isolate Human/India/Ind3/1967) (VARV).